A 127-amino-acid chain; its full sequence is S-adenosylmethionine decarboxylase proenzyme 2 (127 aa).

Ser63 acts as the Schiff-base intermediate with substrate; via pyruvic acid in catalysis. Ser63 is subject to Pyruvic acid (Ser); by autocatalysis. The active-site Proton acceptor; for processing activity is the His68. Residue Cys83 is the Proton donor; for catalytic activity of the active site.

It belongs to the prokaryotic AdoMetDC family. Type 1 subfamily. In terms of assembly, heterotetramer of two alpha and two beta chains arranged as a dimer of alpha/beta heterodimers. Requires pyruvate as cofactor. In terms of processing, is synthesized initially as an inactive proenzyme. Formation of the active enzyme involves a self-maturation process in which the active site pyruvoyl group is generated from an internal serine residue via an autocatalytic post-translational modification. Two non-identical subunits are generated from the proenzyme in this reaction, and the pyruvate is formed at the N-terminus of the alpha chain, which is derived from the carboxyl end of the proenzyme. The post-translation cleavage follows an unusual pathway, termed non-hydrolytic serinolysis, in which the side chain hydroxyl group of the serine supplies its oxygen atom to form the C-terminus of the beta chain, while the remainder of the serine residue undergoes an oxidative deamination to produce ammonia and the pyruvoyl group blocking the N-terminus of the alpha chain.

It carries out the reaction S-adenosyl-L-methionine + H(+) = S-adenosyl 3-(methylsulfanyl)propylamine + CO2. The protein operates within amine and polyamine biosynthesis; S-adenosylmethioninamine biosynthesis; S-adenosylmethioninamine from S-adenosyl-L-methionine: step 1/1. Functionally, catalyzes the decarboxylation of S-adenosylmethionine to S-adenosylmethioninamine (dcAdoMet), the propylamine donor required for the synthesis of the polyamines spermine and spermidine from the diamine putrescine. The sequence is that of S-adenosylmethionine decarboxylase proenzyme 2 from Halalkalibacterium halodurans (strain ATCC BAA-125 / DSM 18197 / FERM 7344 / JCM 9153 / C-125) (Bacillus halodurans).